We begin with the raw amino-acid sequence, 347 residues long: N-acetyl-gamma-glutamyl-phosphate reductase (347 aa).

Cys-150 is an active-site residue.

The protein belongs to the NAGSA dehydrogenase family. Type 1 subfamily.

Its subcellular location is the cytoplasm. The catalysed reaction is N-acetyl-L-glutamate 5-semialdehyde + phosphate + NADP(+) = N-acetyl-L-glutamyl 5-phosphate + NADPH + H(+). It functions in the pathway amino-acid biosynthesis; L-arginine biosynthesis; N(2)-acetyl-L-ornithine from L-glutamate: step 3/4. Catalyzes the NADPH-dependent reduction of N-acetyl-5-glutamyl phosphate to yield N-acetyl-L-glutamate 5-semialdehyde. The polypeptide is N-acetyl-gamma-glutamyl-phosphate reductase (Halothermothrix orenii (strain H 168 / OCM 544 / DSM 9562)).